A 477-amino-acid polypeptide reads, in one-letter code: MQRFAAKRSVQNISVSLWRRCISSTSQAATASVKDSDEFQARLPPFAYTPPPYTGPSADVILSKRKEFLSPSMFCLYRKPLNIVDGKMQYLFDESGRRYLDAFAGIAVVNCGHCHPDVVEPVINQIKRLQHPTVLYLNHAIADFSEALASKLPGDLKVVFFTNSGTEANELALMMAKLYTGCQDIVAVRNGYHGNAAATMGATGQSMWKFNVVQNSVHHALNPDPYRGVFGSDGEKYAKDLQDLIQYGTTGHIAGFICEAIQGVGGIVELAPGYLSAAYDTVKKAGGLFIADEVQSGFARTGNFWGFEAHNVVPDIVTMAKGIGNGFPLGAVVTTPEIAGVLTRRSYFNTFGGNSVSTTAGLAVLNVIEKEKLQENAAMVGSYLKEKLTQLKEKHEIIGDVRGRGLMLGVELVSDRKLKTPATAETLHIMDQMKELGVLIGKGGYFGNVFRITPPLCFTKDDADFLVEAMDYSMSKM.

A mitochondrion-targeting transit peptide spans 1–22 (MQRFAAKRSVQNISVSLWRRCI). Pyridoxal 5'-phosphate is bound by residues 165-166 (GT), tyrosine 192, and 292-295 (DEVQ). Lysine 321 carries the post-translational modification N6-(pyridoxal phosphate)lysine. Threonine 350 serves as a coordination point for pyridoxal 5'-phosphate.

It belongs to the class-III pyridoxal-phosphate-dependent aminotransferase family. Homotetramer. Interacts with GRF3. It depends on pyridoxal 5'-phosphate as a cofactor.

Its subcellular location is the mitochondrion. It catalyses the reaction glyoxylate + L-alanine = glycine + pyruvate. The polypeptide is Alanine--glyoxylate aminotransferase 2 homolog 2, mitochondrial (AGT3) (Arabidopsis thaliana (Mouse-ear cress)).